The sequence spans 185 residues: NOP protein chaperone 1 (185 aa).

The tract at residues 1–40 (MEVHGKPKASPSCSSPTRDSSGVPVSKELLTAGSDGRGGI) is disordered. The span at 10–21 (SPSCSSPTRDSS) shows a compositional bias: low complexity. Phosphoserine is present on residues S34 and S66. Residues 118-185 (FEMNQSDSKE…LDSPASKKKK (68 aa)) are disordered. Acidic residues predominate over residues 143–152 (SESEDEDDSI). Position 178 is a phosphoserine (S178).

As to quaternary structure, interacts with NOP58, RUVBL1 and RUVBL2; the interactions are direct and NOPCHAP1 bridges the association of NOP58 with RUVBL1:RUVBL2 even in absence of snoRNAs. The interactions with RUVBL1 and RUVBL2 are disrupted upon ATP binding.

The protein resides in the nucleus. Its function is as follows. Client-loading PAQosome/R2TP complex cofactor that selects NOP58 to promote box C/D small nucleolar ribonucleoprotein (snoRNP) assembly. Acts as a bridge between NOP58 and the R2TP complex via RUVBL1:RUVBL2. This Homo sapiens (Human) protein is NOP protein chaperone 1.